The chain runs to 485 residues: Protein nucleotidyltransferase YdiU (485 aa).

8 residues coordinate ATP: Gly90, Gly92, Arg93, Lys113, Asp125, Gly126, Arg176, and Arg183. The active-site Proton acceptor is Asp252. Mg(2+)-binding residues include Asn253 and Asp262. Asp262 lines the ATP pocket.

Belongs to the SELO family. Requires Mg(2+) as cofactor. The cofactor is Mn(2+).

It catalyses the reaction L-seryl-[protein] + ATP = 3-O-(5'-adenylyl)-L-seryl-[protein] + diphosphate. The catalysed reaction is L-threonyl-[protein] + ATP = 3-O-(5'-adenylyl)-L-threonyl-[protein] + diphosphate. It carries out the reaction L-tyrosyl-[protein] + ATP = O-(5'-adenylyl)-L-tyrosyl-[protein] + diphosphate. The enzyme catalyses L-histidyl-[protein] + UTP = N(tele)-(5'-uridylyl)-L-histidyl-[protein] + diphosphate. It catalyses the reaction L-seryl-[protein] + UTP = O-(5'-uridylyl)-L-seryl-[protein] + diphosphate. The catalysed reaction is L-tyrosyl-[protein] + UTP = O-(5'-uridylyl)-L-tyrosyl-[protein] + diphosphate. Its function is as follows. Nucleotidyltransferase involved in the post-translational modification of proteins. It can catalyze the addition of adenosine monophosphate (AMP) or uridine monophosphate (UMP) to a protein, resulting in modifications known as AMPylation and UMPylation. This chain is Protein nucleotidyltransferase YdiU, found in Vibrio atlanticus (strain LGP32) (Vibrio splendidus (strain Mel32)).